Consider the following 428-residue polypeptide: Adenylosuccinate synthetase (428 aa).

GTP contacts are provided by residues G12 to K18 and G40 to T42. The active-site Proton acceptor is D13. Mg(2+)-binding residues include D13 and G40. Residues D13–K16, N38–H41, T127, R141, Q222, T237, and R301 each bind IMP. H41 functions as the Proton donor in the catalytic mechanism. T297–R303 contributes to the substrate binding site. GTP is bound by residues R303, C329–D331, and S411–G413.

This sequence belongs to the adenylosuccinate synthetase family. As to quaternary structure, homodimer. Requires Mg(2+) as cofactor.

The protein resides in the cytoplasm. The catalysed reaction is IMP + L-aspartate + GTP = N(6)-(1,2-dicarboxyethyl)-AMP + GDP + phosphate + 2 H(+). It participates in purine metabolism; AMP biosynthesis via de novo pathway; AMP from IMP: step 1/2. In terms of biological role, plays an important role in the de novo pathway of purine nucleotide biosynthesis. Catalyzes the first committed step in the biosynthesis of AMP from IMP. This chain is Adenylosuccinate synthetase, found in Levilactobacillus brevis (strain ATCC 367 / BCRC 12310 / CIP 105137 / JCM 1170 / LMG 11437 / NCIMB 947 / NCTC 947) (Lactobacillus brevis).